The following is a 549-amino-acid chain: Nectin-3 (549 aa).

An N-terminal signal peptide occupies residues 1–57; that stretch reads MARTPGPAPLCPGGGKAQLSSAFPPAAGLLLPAPTPPPLLLLLIPLLLFSRLCGALA. Positions 58-165 constitute an Ig-like V-type domain; that stretch reads GSIIVEPHVT…GNAQSSTTVT (108 aa). The Extracellular segment spans residues 58–404; it reads GSIIVEPHVT…ATLKDDTIGT (347 aa). N-linked (GlcNAc...) asparagine glycans are attached at residues N73, N83, N125, N186, N222, and N331. The cysteines at positions 78 and 148 are disulfide-linked. Ig-like C2-type domains follow at residues 170 to 258 and 269 to 354; these read PTVS…KDIR and PEVS…KVIY. 2 cysteine pairs are disulfide-bonded: C193–C246 and C291–C338. A helical membrane pass occupies residues 405-425; it reads IIASVVGGALFLVLVSILAGV. At 426 to 549 the chain is on the cytoplasmic side; sequence FCYRRRRTFR…SVISRREWYV (124 aa).

Belongs to the nectin family. In terms of assembly, cis- and trans-homodimer. Can form trans-heterodimers with NECTIN1, NECTIN2, PVR, IGSF4B/Necl-1 and with IGSF4. Interaction between NECTIN1 and NECTIN3 on the pre- and postsynaptic sites, respectively, initiates the formation of puncta adherentia junctions between axons and dendrites. Interacts (via Cytoplasmic domain) with AFDN, providing a connection with the actin cytoskeleton. Binds with low affinity to TIGIT. In terms of tissue distribution, ubiquitous with high expression in testes. Localized in spermatids at Sertoli-spermatid junctions. Expressed in ovarian granulosa cells, but only faintly expressed after ovulation.

The protein localises to the cell membrane. It localises to the postsynaptic cell membrane. It is found in the cell junction. The protein resides in the adherens junction. In terms of biological role, cell adhesion molecule that promotes cell-cell adhesion through heterophilic trans-interactions with nectins-like or other nectins, such as trans-interaction with NECTIN2 at Sertoli-spermatid junctions. Trans-interaction with PVR induces activation of CDC42 and RAC small G proteins through common signaling molecules such as SRC and RAP1. Induces endocytosis-mediated down-regulation of PVR from the cell surface, resulting in reduction of cell movement and proliferation. Involved in axon guidance by promoting contacts between the commissural axons and the floor plate cells. Also involved in the formation of cell-cell junctions, including adherens junctions and synapses. Promotes formation of checkerboard-like cellular pattern of hair cells and supporting cells in the auditory epithelium via heterophilic interaction with NECTIN1: NECTIN1 is present in the membrane of hair cells and associates with NECTIN3 on supporting cells, thereby mediating heterotypic adhesion between these two cell types. Plays a role in the morphology of the ciliary body. The protein is Nectin-3 of Mus musculus (Mouse).